We begin with the raw amino-acid sequence, 170 residues long: Adenine phosphoribosyltransferase (170 aa).

It belongs to the purine/pyrimidine phosphoribosyltransferase family. Homodimer.

The protein localises to the cytoplasm. The enzyme catalyses AMP + diphosphate = 5-phospho-alpha-D-ribose 1-diphosphate + adenine. Its pathway is purine metabolism; AMP biosynthesis via salvage pathway; AMP from adenine: step 1/1. In terms of biological role, catalyzes a salvage reaction resulting in the formation of AMP, that is energically less costly than de novo synthesis. In Geobacillus sp. (strain WCH70), this protein is Adenine phosphoribosyltransferase.